The sequence spans 529 residues: Tyrosinase (529 aa).

The first 18 residues, 1–18, serve as a signal peptide directing secretion; the sequence is MLLAVLYCLLWSFQTSAG. Over 19 to 476 the chain is Lumenal, melanosome; sequence HFPRACVSSK…YLEQASRIWS (458 aa). 3 N-linked (GlcNAc...) asparagine glycosylation sites follow: Asn-86, Asn-111, and Asn-161. His-180, His-202, and His-211 together coordinate Cu cation. Asn-230 carries N-linked (GlcNAc...) asparagine glycosylation. Residues 287–313 are disordered; the sequence is SLCNGTPEGPLRRNPGNHDKSRTPRLP. A glycan (N-linked (GlcNAc...) asparagine) is linked at Asn-337. 2 residues coordinate Cu cation: His-363 and His-367. Asn-371 carries an N-linked (GlcNAc...) asparagine glycan. Residue His-390 coordinates Cu cation. The chain crosses the membrane as a helical span at residues 477-497; sequence WLLGAAMVGAVLTALLAGLVS. The Cytoplasmic portion of the chain corresponds to 498–529; it reads LLCRHKRKQLPEEKQPLLMEKEDYHSLYQSHL.

It belongs to the tyrosinase family. In terms of assembly, forms an OPN3-dependent complex with DCT in response to blue light in melanocytes. The cofactor is Cu(2+). Post-translationally, glycosylated.

It localises to the melanosome membrane. The protein resides in the melanosome. It carries out the reaction 2 L-dopa + O2 = 2 L-dopaquinone + 2 H2O. The catalysed reaction is L-tyrosine + O2 = L-dopaquinone + H2O. It catalyses the reaction 2 5,6-dihydroxyindole-2-carboxylate + O2 = 2 indole-5,6-quinone-2-carboxylate + 2 H2O. In terms of biological role, this is a copper-containing oxidase that functions in the formation of pigments such as melanins and other polyphenolic compounds. Catalyzes the initial and rate limiting step in the cascade of reactions leading to melanin production from tyrosine. In addition to hydroxylating tyrosine to DOPA (3,4-dihydroxyphenylalanine), also catalyzes the oxidation of DOPA to DOPA-quinone, and possibly the oxidation of DHI (5,6-dihydroxyindole) to indole-5,6 quinone. The polypeptide is Tyrosinase (Homo sapiens (Human)).